The chain runs to 426 residues: MDLFLQIRKVNLFFPDKRDRPFSPDRINRPFSPDKKGEPIFPDKRDRPFSSDRINRPFSPDKKGEPIFPDKKDRPFSSDRINRPFSPDKKGEPIFPDKRDRPFSPDKKGEYIYPDKRDRSFSPYRINRSFYQDKKGESIYLDKRDKYFFSDRKNRHFFLDKKDEPIFTDDINKSIFLDEKDKLSYVDKKNISFSVGDGKSESVYRDKMDKFIFSNESNKSFYLDKKDESFYLDMMNTPFYSDWRNRLFNPDKSNKSFSSNKKDESVFFDKRNKLFSADKGNIPFSLNEKSEPVYFDKKDKFIFSDKRDKPIFSDNKDKVFFSNKENKFIFSDEKYESIFKDRPFFIDRSKYNKPFFIDKSKYNRPFFIDKSKSNNIPFFSYQKKEPFIYRKNKPLNYQKNKNFFYKRKRKKKLNRLFCKMAMVYIL.

The tract at residues 17-114 (KRDRPFSPDR…PDKKGEYIYP (98 aa)) is disordered.

It localises to the plastid. This is an uncharacterized protein from Euglena longa (Euglenophycean alga).